Reading from the N-terminus, the 121-residue chain is Ribonuclease P protein component (121 aa).

Belongs to the RnpA family. As to quaternary structure, consists of a catalytic RNA component (M1 or rnpB) and a protein subunit.

The enzyme catalyses Endonucleolytic cleavage of RNA, removing 5'-extranucleotides from tRNA precursor.. Functionally, RNaseP catalyzes the removal of the 5'-leader sequence from pre-tRNA to produce the mature 5'-terminus. It can also cleave other RNA substrates such as 4.5S RNA. The protein component plays an auxiliary but essential role in vivo by binding to the 5'-leader sequence and broadening the substrate specificity of the ribozyme. This chain is Ribonuclease P protein component, found in Erythrobacter litoralis (strain HTCC2594).